The following is a 494-amino-acid chain: Probable cytosol aminopeptidase (494 aa).

Residues lysine 260 and aspartate 265 each contribute to the Mn(2+) site. Lysine 272 is a catalytic residue. Mn(2+)-binding residues include aspartate 283, aspartate 342, and glutamate 344. Arginine 346 is a catalytic residue.

This sequence belongs to the peptidase M17 family. Mn(2+) is required as a cofactor.

It localises to the cytoplasm. The catalysed reaction is Release of an N-terminal amino acid, Xaa-|-Yaa-, in which Xaa is preferably Leu, but may be other amino acids including Pro although not Arg or Lys, and Yaa may be Pro. Amino acid amides and methyl esters are also readily hydrolyzed, but rates on arylamides are exceedingly low.. It carries out the reaction Release of an N-terminal amino acid, preferentially leucine, but not glutamic or aspartic acids.. In terms of biological role, presumably involved in the processing and regular turnover of intracellular proteins. Catalyzes the removal of unsubstituted N-terminal amino acids from various peptides. This is Probable cytosol aminopeptidase from Bacillus cereus (strain B4264).